The primary structure comprises 727 residues: Pentatricopeptide repeat-containing protein At2g33680 (727 aa).

PPR repeat units lie at residues 13-47, 48-78, 79-116, 117-150, 152-182, 183-213, 220-254, 255-285, 286-320, 321-355, 356-386, 387-421, 422-456, 457-487, 488-522, 523-553, and 559-593; these read HTST…GAST, CIQH…IICK, DVVS…DILP, NAYT…MSSF, DIYV…MPER, NTYT…FLRE, SDYV…GLLG, FVAL…SGDR, NSIT…GIKP, SEYT…GFER, HLFA…LQER, DVAL…GIIP, NDPT…GFGL, EVPI…TPNK, DVVS…GMEP, DDVT…MSDQ, and KVDH…HGLC. Residues 594–669 are type E motif; sequence LWRILLSACK…EVGCSWIELK (76 aa). Residues 670 to 700 form a type E(+) motif region; it reads NQYHVFVVGDTMHPMIEETKDLVCLVSRQMI.

It belongs to the PPR family. PCMP-E subfamily.

This is Pentatricopeptide repeat-containing protein At2g33680 (PCMP-E19) from Arabidopsis thaliana (Mouse-ear cress).